The chain runs to 156 residues: 6,7-dimethyl-8-ribityllumazine synthase (156 aa).

5-amino-6-(D-ribitylamino)uracil is bound by residues Phe23, 57-59, and 81-83; these read AYE and AII. 86–87 contacts (2S)-2-hydroxy-3-oxobutyl phosphate; it reads ST. Residue His89 is the Proton donor of the active site. Phe114 is a binding site for 5-amino-6-(D-ribitylamino)uracil. Residue Arg128 coordinates (2S)-2-hydroxy-3-oxobutyl phosphate.

The protein belongs to the DMRL synthase family.

It catalyses the reaction (2S)-2-hydroxy-3-oxobutyl phosphate + 5-amino-6-(D-ribitylamino)uracil = 6,7-dimethyl-8-(1-D-ribityl)lumazine + phosphate + 2 H2O + H(+). Its pathway is cofactor biosynthesis; riboflavin biosynthesis; riboflavin from 2-hydroxy-3-oxobutyl phosphate and 5-amino-6-(D-ribitylamino)uracil: step 1/2. Its function is as follows. Catalyzes the formation of 6,7-dimethyl-8-ribityllumazine by condensation of 5-amino-6-(D-ribitylamino)uracil with 3,4-dihydroxy-2-butanone 4-phosphate. This is the penultimate step in the biosynthesis of riboflavin. This Campylobacter hominis (strain ATCC BAA-381 / DSM 21671 / CCUG 45161 / LMG 19568 / NCTC 13146 / CH001A) protein is 6,7-dimethyl-8-ribityllumazine synthase.